A 788-amino-acid chain; its full sequence is Endonuclease MutS2 (788 aa).

332–339 contacts ATP; that stretch reads GPNTGGKT. Residues 713 to 788 enclose the Smr domain; sequence VDLRGMDAEE…GTGVTVVEIK (76 aa).

This sequence belongs to the DNA mismatch repair MutS family. MutS2 subfamily. Homodimer. Binds to stalled ribosomes, contacting rRNA.

Its function is as follows. Endonuclease that is involved in the suppression of homologous recombination and thus may have a key role in the control of bacterial genetic diversity. In terms of biological role, acts as a ribosome collision sensor, splitting the ribosome into its 2 subunits. Detects stalled/collided 70S ribosomes which it binds and splits by an ATP-hydrolysis driven conformational change. Acts upstream of the ribosome quality control system (RQC), a ribosome-associated complex that mediates the extraction of incompletely synthesized nascent chains from stalled ribosomes and their subsequent degradation. Probably generates substrates for RQC. The sequence is that of Endonuclease MutS2 from Clostridium botulinum (strain Loch Maree / Type A3).